Reading from the N-terminus, the 937-residue chain is Translation initiation factor IF-2 (937 aa).

Disordered regions lie at residues 157 to 230 (KEAQ…AARK) and 250 to 346 (IKAP…ESNF). Residues 173 to 205 (EAQKADAAKPVEAKADESAQEEKKRVAAEESKK) show a composition bias toward basic and acidic residues. Positions 252–265 (APEPAAPVAAKPAE) are enriched in low complexity. Residues 267–293 (TLHKPADKKAGEKKDEKKPAVTADKKS) show a composition bias toward basic and acidic residues. Positions 295-304 (KSANVSSTWQ) are enriched in polar residues. The tr-type G domain maps to 437-606 (PRAPVVTVMG…LLQAEVLELK (170 aa)). The G1 stretch occupies residues 446–453 (GHVDHGKT). 446–453 (GHVDHGKT) provides a ligand contact to GTP. Residues 471-475 (GITQH) form a G2 region. The G3 stretch occupies residues 492–495 (DTPG). Residues 492 to 496 (DTPGH) and 546 to 549 (NKID) contribute to the GTP site. A G4 region spans residues 546–549 (NKID). Residues 582 to 584 (SAK) are G5.

It belongs to the TRAFAC class translation factor GTPase superfamily. Classic translation factor GTPase family. IF-2 subfamily.

It is found in the cytoplasm. In terms of biological role, one of the essential components for the initiation of protein synthesis. Protects formylmethionyl-tRNA from spontaneous hydrolysis and promotes its binding to the 30S ribosomal subunits. Also involved in the hydrolysis of GTP during the formation of the 70S ribosomal complex. The sequence is that of Translation initiation factor IF-2 from Janthinobacterium sp. (strain Marseille) (Minibacterium massiliensis).